Reading from the N-terminus, the 153-residue chain is Lipoprotein signal peptidase (153 aa).

Helical transmembrane passes span 7 to 27, 59 to 79, and 93 to 113; these read LIII…LNNY, NLIR…IFYM, and SIII…GSVI. Residues D114 and D132 contribute to the active site. A helical transmembrane segment spans residues 123 to 143; sequence WHFPVFNFADISIFIGFLILI.

This sequence belongs to the peptidase A8 family.

Its subcellular location is the cell membrane. The enzyme catalyses Release of signal peptides from bacterial membrane prolipoproteins. Hydrolyzes -Xaa-Yaa-Zaa-|-(S,diacylglyceryl)Cys-, in which Xaa is hydrophobic (preferably Leu), and Yaa (Ala or Ser) and Zaa (Gly or Ala) have small, neutral side chains.. It functions in the pathway protein modification; lipoprotein biosynthesis (signal peptide cleavage). This protein specifically catalyzes the removal of signal peptides from prolipoproteins. The protein is Lipoprotein signal peptidase of Wigglesworthia glossinidia brevipalpis.